Here is a 545-residue protein sequence, read N- to C-terminus: Chaperonin GroEL (545 aa).

ATP is bound by residues 29 to 32 (TLGP), 86 to 90 (DGTTT), glycine 413, 476 to 478 (NAA), and aspartate 492.

Belongs to the chaperonin (HSP60) family. Forms a cylinder of 14 subunits composed of two heptameric rings stacked back-to-back. Interacts with the co-chaperonin GroES.

It localises to the cytoplasm. The catalysed reaction is ATP + H2O + a folded polypeptide = ADP + phosphate + an unfolded polypeptide.. Together with its co-chaperonin GroES, plays an essential role in assisting protein folding. The GroEL-GroES system forms a nano-cage that allows encapsulation of the non-native substrate proteins and provides a physical environment optimized to promote and accelerate protein folding. This is Chaperonin GroEL from Shouchella clausii (strain KSM-K16) (Alkalihalobacillus clausii).